The sequence spans 452 residues: Nuclear distribution protein PAC1 (452 aa).

The region spanning 12-44 (QKDELHKAILAYFSASGLSNTGAALREELGVGD) is the LisH domain. The stretch at 64-91 (TGVLRLQKKIMELESRLSSLQSELDSAT) forms a coiled coil. 8 WD repeats span residues 117–158 (SHRN…RTVK), 160–200 (HTKA…KNIR), 204–245 (GHDH…CVKT), 248–287 (GHSD…HKAT), 290–350 (GHEH…LKTL), 352–391 (GHDN…RCVK), 396–435 (AHSH…INVR), and 437–452 (VIAT…VFAS).

This sequence belongs to the WD repeat LIS1/nudF family. In terms of assembly, self-associates. Interacts with NDL1 and dynein.

Its subcellular location is the cytoplasm. It localises to the cytoskeleton. The protein resides in the spindle pole. In terms of biological role, positively regulates the activity of the minus-end directed microtubule motor protein dynein. May enhance dynein-mediated microtubule sliding by targeting dynein to the microtubule plus end. Required for nuclear migration during vegetative growth as well as development. Required for retrograde early endosome (EE) transport from the hyphal tip. Required for localization of dynein to the mitotic spindle poles. Recruits additional proteins to the dynein complex at SPBs. The protein is Nuclear distribution protein PAC1 of Tuber melanosporum (strain Mel28) (Perigord black truffle).